A 595-amino-acid polypeptide reads, in one-letter code: Putative histone-lysine N-methyltransferase PRDM6 (595 aa).

Residues 27–90 (FPHGGAGPLK…STPASSSTSA (64 aa)) are disordered. Gly residues predominate over residues 30 to 40 (GGAGPLKGSGA). Residues 49–59 (PLQPPPPPPPP) are compositionally biased toward pro residues. Residues 71 to 90 (PRPASLSSASSTPASSSTSA) show a composition bias toward low complexity. One can recognise an SET domain in the interval 246–365 (REVCLCTSTV…RGTELLVWYN (120 aa)). The C2H2-type 1; degenerate zinc finger occupies 473–495 (WKCGQCFKTFTQRILLQMHVCTQ). 2 C2H2-type zinc fingers span residues 501–523 (YQCG…VVTH) and 529–551 (FKCG…IRTH). The C2H2-type 4; degenerate zinc finger occupies 557-579 (FKCERCERSFTQATQLSRHQRMP).

Belongs to the class V-like SAM-binding methyltransferase superfamily. In terms of assembly, interacts with HDAC1, HDAC2, HDAC3, CBX1 and EP300.

It is found in the nucleus. It carries out the reaction L-lysyl(20)-[histone H4] + S-adenosyl-L-methionine = N(6)-methyl-L-lysyl(20)-[histone H4] + S-adenosyl-L-homocysteine + H(+). In terms of biological role, putative histone methyltransferase that acts as a transcriptional repressor of smooth muscle gene expression. Promotes the transition from differentiated to proliferative smooth muscle by suppressing differentiation and maintaining the proliferative potential of vascular smooth muscle cells. Also plays a role in endothelial cells by inhibiting endothelial cell proliferation, survival and differentiation. It is unclear whether it has histone methyltransferase activity in vivo. According to some authors, it does not act as a histone methyltransferase by itself and represses transcription by recruiting EHMT2/G9a. According to others, it possesses histone methyltransferase activity when associated with other proteins and specifically methylates 'Lys-20' of histone H4 in vitro. 'Lys-20' methylation represents a specific tag for epigenetic transcriptional repression. This is Putative histone-lysine N-methyltransferase PRDM6 (PRDM6) from Homo sapiens (Human).